Reading from the N-terminus, the 113-residue chain is Probable 4-amino-4-deoxy-L-arabinose-phosphoundecaprenol flippase subunit ArnE (113 aa).

3 consecutive transmembrane segments (helical) span residues 40-60 (FGWL…WLLV), 64-84 (LPLG…TLLA), and 92-112 (VDRH…LMQG).

It belongs to the ArnE family. Heterodimer of ArnE and ArnF.

It localises to the cell inner membrane. The protein operates within bacterial outer membrane biogenesis; lipopolysaccharide biosynthesis. Translocates 4-amino-4-deoxy-L-arabinose-phosphoundecaprenol (alpha-L-Ara4N-phosphoundecaprenol) from the cytoplasmic to the periplasmic side of the inner membrane. This is Probable 4-amino-4-deoxy-L-arabinose-phosphoundecaprenol flippase subunit ArnE from Pectobacterium atrosepticum (strain SCRI 1043 / ATCC BAA-672) (Erwinia carotovora subsp. atroseptica).